The following is a 379-amino-acid chain: MRVDLFDFDLPDERIALRPAEPRDSARLLVVNPHAESRPHAESVPHAESRPHAESAFSDHRVGDLPSFLRAGDALVFNDTKVIPAQLEGIRHRDGAGGQQVSATLHMRVGPSRWKAFAKPGKRIKEGDRIAFGHSGESCLLGSLDATVEEKGEAGEVTLAFDLSGPALDEAIAAVGHIPLPPYIAAKRPEDERDRADYQTIYAREEGAVAAPTAGLHFTPALFEALDRAGIERHFVTLHVGAGTFLPVKADDTADHKMHLESGTVSAETAARLNAVKARGGRIVCVGTTSLRLIESAAEESGEIRGWSGATGIFITPGYRFKAVDMLMTNFHLPRSTLFMLVSAFSGFETMHAAYKHAISTGYRFYSYGDASLLFRKDK.

A disordered region spans residues 35–58 (AESRPHAESVPHAESRPHAESAFS).

It belongs to the QueA family. Monomer.

It is found in the cytoplasm. The enzyme catalyses 7-aminomethyl-7-carbaguanosine(34) in tRNA + S-adenosyl-L-methionine = epoxyqueuosine(34) in tRNA + adenine + L-methionine + 2 H(+). It functions in the pathway tRNA modification; tRNA-queuosine biosynthesis. Its function is as follows. Transfers and isomerizes the ribose moiety from AdoMet to the 7-aminomethyl group of 7-deazaguanine (preQ1-tRNA) to give epoxyqueuosine (oQ-tRNA). The polypeptide is S-adenosylmethionine:tRNA ribosyltransferase-isomerase (Rhizobium leguminosarum bv. trifolii (strain WSM2304)).